The following is a 174-amino-acid chain: NADH-ubiquinone oxidoreductase chain 6 (174 aa).

4 consecutive transmembrane segments (helical) span residues 24-44 (LALG…SGLM), 53-73 (ILFL…TSLA), 82-102 (IKLT…SMIL), and 143-163 (FVTI…VKIT).

This sequence belongs to the complex I subunit 6 family.

It is found in the mitochondrion membrane. It catalyses the reaction a ubiquinone + NADH + 5 H(+)(in) = a ubiquinol + NAD(+) + 4 H(+)(out). In terms of biological role, core subunit of the mitochondrial membrane respiratory chain NADH dehydrogenase (Complex I) that is believed to belong to the minimal assembly required for catalysis. Complex I functions in the transfer of electrons from NADH to the respiratory chain. The immediate electron acceptor for the enzyme is believed to be ubiquinone. This Drosophila yakuba (Fruit fly) protein is NADH-ubiquinone oxidoreductase chain 6 (mt:ND6).